The following is a 117-amino-acid chain: Large ribosomal subunit protein bL20c (117 aa).

This sequence belongs to the bacterial ribosomal protein bL20 family.

Its subcellular location is the plastid. It is found in the chloroplast. Binds directly to 23S ribosomal RNA and is necessary for the in vitro assembly process of the 50S ribosomal subunit. It is not involved in the protein synthesizing functions of that subunit. This is Large ribosomal subunit protein bL20c from Carica papaya (Papaya).